Consider the following 290-residue polypeptide: MPQTRLFFRSNGAPAREAFSRLEAAFEEDGLPLAIRELDEERDIHEVSIYASEDWEGVADRMRSCLTSIAGLSEIETEELPEIDWVAHSLAGLKAVRAGRFFVHGSHERGQHRAGEIPIEIEASLAFGTGHHGTTSGCLEMISRVVPREHPRNALDLGTGSAVLAIAIARLAHIPVLATDIDPVAVRVARENVRLNRAAEWVETAAAPGFHHPAFARRMPFDLIVANILARPLIGLAPAMARHLSPGGSLILSGILTHQRRQVIAGYVGQGFRHLTTLHREEWVTIHMKR.

S-adenosyl-L-methionine is bound by residues threonine 135, glycine 158, aspartate 180, and asparagine 227.

This sequence belongs to the methyltransferase superfamily. PrmA family.

The protein localises to the cytoplasm. It carries out the reaction L-lysyl-[protein] + 3 S-adenosyl-L-methionine = N(6),N(6),N(6)-trimethyl-L-lysyl-[protein] + 3 S-adenosyl-L-homocysteine + 3 H(+). Its function is as follows. Methylates ribosomal protein L11. The polypeptide is Ribosomal protein L11 methyltransferase (Chelativorans sp. (strain BNC1)).